The chain runs to 236 residues: 4-hydroxy-tetrahydrodipicolinate reductase (236 aa).

Residues 11–16 (GASGRM), 92–94 (GTT), and 116–119 (GSNF) contribute to the NAD(+) site. The Proton donor/acceptor role is filled by His-148. (S)-2,3,4,5-tetrahydrodipicolinate is bound at residue His-149. Catalysis depends on Lys-152, which acts as the Proton donor. Residue 158-159 (GS) coordinates (S)-2,3,4,5-tetrahydrodipicolinate.

Belongs to the DapB family.

It localises to the cytoplasm. The enzyme catalyses (S)-2,3,4,5-tetrahydrodipicolinate + NAD(+) + H2O = (2S,4S)-4-hydroxy-2,3,4,5-tetrahydrodipicolinate + NADH + H(+). It catalyses the reaction (S)-2,3,4,5-tetrahydrodipicolinate + NADP(+) + H2O = (2S,4S)-4-hydroxy-2,3,4,5-tetrahydrodipicolinate + NADPH + H(+). The protein operates within amino-acid biosynthesis; L-lysine biosynthesis via DAP pathway; (S)-tetrahydrodipicolinate from L-aspartate: step 4/4. Functionally, catalyzes the conversion of 4-hydroxy-tetrahydrodipicolinate (HTPA) to tetrahydrodipicolinate. This Xylella fastidiosa (strain M23) protein is 4-hydroxy-tetrahydrodipicolinate reductase.